The primary structure comprises 414 residues: Gamma-glutamyl phosphate reductase (414 aa).

Belongs to the gamma-glutamyl phosphate reductase family.

It localises to the cytoplasm. The enzyme catalyses L-glutamate 5-semialdehyde + phosphate + NADP(+) = L-glutamyl 5-phosphate + NADPH + H(+). It functions in the pathway amino-acid biosynthesis; L-proline biosynthesis; L-glutamate 5-semialdehyde from L-glutamate: step 2/2. Catalyzes the NADPH-dependent reduction of L-glutamate 5-phosphate into L-glutamate 5-semialdehyde and phosphate. The product spontaneously undergoes cyclization to form 1-pyrroline-5-carboxylate. In Caldanaerobacter subterraneus subsp. tengcongensis (strain DSM 15242 / JCM 11007 / NBRC 100824 / MB4) (Thermoanaerobacter tengcongensis), this protein is Gamma-glutamyl phosphate reductase.